Here is a 72-residue protein sequence, read N- to C-terminus: Putative snRNP Sm-like protein (72 aa).

Residues 4 to 72 (RPLDILNNAL…RGDNVVYVSP (69 aa)) form the Sm domain.

The protein belongs to the snRNP Sm proteins family.

This Methanosarcina acetivorans (strain ATCC 35395 / DSM 2834 / JCM 12185 / C2A) protein is Putative snRNP Sm-like protein.